Here is a 272-residue protein sequence, read N- to C-terminus: Phosphoribosylformylglycinamidine synthase subunit PurQ (272 aa).

The Glutamine amidotransferase type-1 domain maps to 8 to 243 (VLVMSGYGIN…SEPEYQLKKE (236 aa)). Catalysis depends on cysteine 98, which acts as the Nucleophile. Catalysis depends on residues histidine 225, glutamate 227, and glutamate 235.

As to quaternary structure, part of the FGAM synthase complex composed of 1 PurL, 1 PurQ and 2 PurS subunits.

It is found in the cytoplasm. The enzyme catalyses N(2)-formyl-N(1)-(5-phospho-beta-D-ribosyl)glycinamide + L-glutamine + ATP + H2O = 2-formamido-N(1)-(5-O-phospho-beta-D-ribosyl)acetamidine + L-glutamate + ADP + phosphate + H(+). The catalysed reaction is L-glutamine + H2O = L-glutamate + NH4(+). It functions in the pathway purine metabolism; IMP biosynthesis via de novo pathway; 5-amino-1-(5-phospho-D-ribosyl)imidazole from N(2)-formyl-N(1)-(5-phospho-D-ribosyl)glycinamide: step 1/2. Functionally, part of the phosphoribosylformylglycinamidine synthase complex involved in the purines biosynthetic pathway. Catalyzes the ATP-dependent conversion of formylglycinamide ribonucleotide (FGAR) and glutamine to yield formylglycinamidine ribonucleotide (FGAM) and glutamate. The FGAM synthase complex is composed of three subunits. PurQ produces an ammonia molecule by converting glutamine to glutamate. PurL transfers the ammonia molecule to FGAR to form FGAM in an ATP-dependent manner. PurS interacts with PurQ and PurL and is thought to assist in the transfer of the ammonia molecule from PurQ to PurL. This is Phosphoribosylformylglycinamidine synthase subunit PurQ from Methanococcus maripaludis (strain C7 / ATCC BAA-1331).